The following is a 515-amino-acid chain: Tetratricopeptide repeat protein 8 (515 aa).

One copy of the TPR 1 repeat lies at 4 to 37; sequence EMEPLLRAWSYFRRRKFQLCADLCTQMLEKSPYD. Disordered stretches follow at residues 89-109 and 118-137; these read RPGT…TQAV and PITG…TMEQ. TPR repeat units follow at residues 225–258, 259–291, 292–325, 326–359, 360–393, 397–430, and 432–464; these read WWWK…QEMV, DTFL…FPGE, VTLL…DNTH, VEAI…GVYN, CQLF…AENE, ADVW…NNHH, and EAYN…APHM.

As to quaternary structure, part of BBSome complex, that contains BBS1, BBS2, BBS4, BBS5, BBS7, BBS8/TTC8, BBS9 and BBIP10. Interacts with PCM1. Interacts with CCDC28B. Interacts with PKD1. Isoform 1 is retina-specific whereas isoform 2 is ubiquitously expressed.

The protein resides in the cytoplasm. It localises to the cytoskeleton. It is found in the microtubule organizing center. The protein localises to the centrosome. Its subcellular location is the centriole. The protein resides in the cell projection. It localises to the cilium membrane. It is found in the centriolar satellite. The protein localises to the cilium. Its function is as follows. The BBSome complex is thought to function as a coat complex required for sorting of specific membrane proteins to the primary cilia. The BBSome complex is required for ciliogenesis but is dispensable for centriolar satellite function. This ciliogenic function is mediated in part by the Rab8 GDP/GTP exchange factor, which localizes to the basal body and contacts the BBSome. Rab8(GTP) enters the primary cilium and promotes extension of the ciliary membrane. Firstly the BBSome associates with the ciliary membrane and binds to RAB3IP/Rabin8, the guanosyl exchange factor (GEF) for Rab8 and then the Rab8-GTP localizes to the cilium and promotes docking and fusion of carrier vesicles to the base of the ciliary membrane. The BBSome complex, together with the LTZL1, controls SMO ciliary trafficking and contributes to the sonic hedgehog (SHH) pathway regulation. Required for proper BBSome complex assembly and its ciliary localization. The sequence is that of Tetratricopeptide repeat protein 8 (Ttc8) from Mus musculus (Mouse).